Consider the following 653-residue polypeptide: Protein SCARECROW (653 aa).

Disordered regions lie at residues 1–69 (MAES…RRVS) and 193–265 (PSSS…AVQT). The span at 17 to 31 (PLRTTSSGSSSSNNR) shows a compositional bias: low complexity. Positions 32–41 (GPPPPPPPPL) are enriched in pro residues. Positions 51-63 (EMSSNPDYNNSSR) are enriched in polar residues. Over residues 209–230 (QISNNPSPPQQQQQHQQQQQQH) the composition is skewed to low complexity. Over residues 246-265 (STDAPPQPETVTATVPAVQT) the composition is skewed to polar residues. The 370-residue stretch at 281–650 (QKQDEEGLHL…LSLLTASAWT (370 aa)) folds into the GRAS domain. Residues 288-351 (LHLLTLLLQC…LLNSCLGIYA (64 aa)) form a leucine repeat I (LRI) region. The LxCxE motif motif lies at 295-299 (LQCAE). A VHIID region spans residues 370-435 (FQVFNGISPL…GGPPHVRLTG (66 aa)). The VHIID motif lies at 401–405 (VHIID). The interval 445 to 477 (ATGKRLSDFADKLGLPFEFCPLAEKVGNLDTER) is leucine repeat II (LRII). A PFYRE region spans residues 486 to 573 (VAVHWLQHSL…QQLLSKEIRN (88 aa)). Positions 576–650 (AVGGPSRSGE…LSLLTASAWT (75 aa)) are SAW.

Belongs to the GRAS family. In terms of assembly, interacts with SHR, JKD and MGP. Interacts with SIEL. Interacts with RBR1 through its the LxCxE motif. Expressed in siliques, leaves and roots. Detected in the initial daughter cell before its asymmetric division and remains expressed only in the endodermal cell layer after the division. Expressed in the endodermis or starch sheath of the seedling hypocotyl, in the leaf bundle sheath cells and the root quiescent center.

The protein resides in the nucleus. Its function is as follows. Transcription factor required for quiescent center cells specification and maintenance of surrounding stem cells, and for the asymmetric cell division involved in radial pattern formation in roots. Essential for cell division but not differentiation of the ground tissue. Also required for normal shoot gravitropism. Regulates the radial organization of the shoot axial organs. Binds to the promoter of MGP, NUC, RLK and SCL3. Restricts SHR movment and sequesters it into the nucleus of the endodermis. The chain is Protein SCARECROW from Arabidopsis thaliana (Mouse-ear cress).